The sequence spans 508 residues: Anaerobic nitric oxide reductase transcription regulator NorR (508 aa).

Residue aspartate 56 is modified to 4-aspartylphosphate. The Sigma-54 factor interaction domain maps to 186-415; the sequence is MIGQSPAMAR…LEHAIHRAAV (230 aa). Residues 214-221 and 277-286 contribute to the ATP site; these read GETGVGKE and ADQGTLFLDE. A DNA-binding region (H-T-H motif) is located at residues 483-502; sequence WAATARALELDSGNLHRLAK.

Its pathway is nitrogen metabolism; nitric oxide reduction. Required for the expression of anaerobic nitric oxide (NO) reductase, acts as a transcriptional activator for at least the norVW operon. Activation also requires sigma-54. This chain is Anaerobic nitric oxide reductase transcription regulator NorR, found in Aeromonas hydrophila subsp. hydrophila (strain ATCC 7966 / DSM 30187 / BCRC 13018 / CCUG 14551 / JCM 1027 / KCTC 2358 / NCIMB 9240 / NCTC 8049).